The sequence spans 306 residues: Acetyl-coenzyme A carboxylase carboxyl transferase subunit beta (306 aa).

One can recognise a CoA carboxyltransferase N-terminal domain in the interval 27–296; that stretch reads LWHKCPSCEA…PRFVAPVIEP (270 aa). Residues cysteine 31, cysteine 34, cysteine 50, and cysteine 53 each contribute to the Zn(2+) site. Residues 31–53 form a C4-type zinc finger; the sequence is CPSCEAVLYRPELEKTLDVCPKC.

This sequence belongs to the AccD/PCCB family. Acetyl-CoA carboxylase is a heterohexamer composed of biotin carboxyl carrier protein (AccB), biotin carboxylase (AccC) and two subunits each of ACCase subunit alpha (AccA) and ACCase subunit beta (AccD). Zn(2+) is required as a cofactor.

It is found in the cytoplasm. The enzyme catalyses N(6)-carboxybiotinyl-L-lysyl-[protein] + acetyl-CoA = N(6)-biotinyl-L-lysyl-[protein] + malonyl-CoA. It functions in the pathway lipid metabolism; malonyl-CoA biosynthesis; malonyl-CoA from acetyl-CoA: step 1/1. In terms of biological role, component of the acetyl coenzyme A carboxylase (ACC) complex. Biotin carboxylase (BC) catalyzes the carboxylation of biotin on its carrier protein (BCCP) and then the CO(2) group is transferred by the transcarboxylase to acetyl-CoA to form malonyl-CoA. The chain is Acetyl-coenzyme A carboxylase carboxyl transferase subunit beta from Pseudomonas syringae pv. syringae (strain B728a).